The sequence spans 777 residues: 1,4-alpha-glucan branching enzyme GlgB (777 aa).

D408 serves as the catalytic Nucleophile. E461 acts as the Proton donor in catalysis.

It belongs to the glycosyl hydrolase 13 family. GlgB subfamily. Monomer.

The catalysed reaction is Transfers a segment of a (1-&gt;4)-alpha-D-glucan chain to a primary hydroxy group in a similar glucan chain.. Its pathway is glycan biosynthesis; glycogen biosynthesis. Its function is as follows. Catalyzes the formation of the alpha-1,6-glucosidic linkages in glycogen by scission of a 1,4-alpha-linked oligosaccharide from growing alpha-1,4-glucan chains and the subsequent attachment of the oligosaccharide to the alpha-1,6 position. This Actinobacillus pleuropneumoniae serotype 5b (strain L20) protein is 1,4-alpha-glucan branching enzyme GlgB.